Consider the following 970-residue polypeptide: Sodium/calcium exchanger 1 (970 aa).

The first 32 residues, 1-32, serve as a signal peptide directing secretion; the sequence is MLQFSLSPTLSMGFHVIAMVALLFSHVDHISA. The Extracellular segment spans residues 33-71; that stretch reads ETEMEGEGNETGECTGSYYCKKGVILPIWEPQDPSFGDK. Asparagine 41 carries N-linked (GlcNAc...) asparagine glycosylation. Residues 72–92 traverse the membrane as a helical segment; that stretch reads IARATVYFVAMVYMFLGVSII. The Cytoplasmic portion of the chain corresponds to 93-133; that stretch reads ADRFMSSIEVITSQEKEITIKKPNGETTKTTVRIWNETVSN. A helical membrane pass occupies residues 134 to 154; it reads LTLMALGSSAPEILLSVIEVC. The stretch at 138-178 is one Alpha-1 repeat; it reads ALGSSAPEILLSVIEVCGHNFTAGDLGPSTIVGSAAFNMFI. Residues 155 to 167 lie on the Extracellular side of the membrane; that stretch reads GHNFTAGDLGPST. N-linked (GlcNAc...) asparagine glycosylation is present at asparagine 157. The chain crosses the membrane as a helical span at residues 168–188; the sequence is IVGSAAFNMFIIIALCVYVVP. Residues 189–201 lie on the Cytoplasmic side of the membrane; that stretch reads DGETRKIKHLRVF. The chain crosses the membrane as a helical span at residues 202–222; the sequence is FVTAAWSIFAYTWLYIILSVS. At 223 to 228 the chain is on the extracellular side; that stretch reads SPGVVE. A helical membrane pass occupies residues 229–249; the sequence is VWEGLLTFFFFPICVVFAWVA. The Cytoplasmic portion of the chain corresponds to 250–797; it reads DRRLLFYKYV…FVPPTEYWNG (548 aa). The putative calmodulin-binding region stretch occupies residues 251–270; it reads RRLLFYKYVYKRYRAGKQRG. Residues serine 282 and serine 389 each carry the phosphoserine modification. 2 Calx-beta domains span residues 393–493 and 524–624; these read VNTE…VHLS and ATVT…LEIG. Ca(2+)-binding residues include glutamate 417, aspartate 453, aspartate 478, aspartate 479, isoleucine 481, glutamate 483, glutamate 486, aspartate 530, aspartate 531, aspartate 532, glutamate 548, aspartate 584, aspartate 610, glutamate 611, glutamate 612, and glutamate 715. The chain crosses the membrane as a helical span at residues 798-818; sequence WACFIVSILMIGLLTAFIGDL. Residues 819-821 are Extracellular-facing; it reads ASH. The helical transmembrane segment at 822–842 threads the bilayer; the sequence is FACTIALKDSVTAVVFVALGT. Residues 839-875 form an Alpha-2 repeat; it reads ALGTSVPDTFASKVAATQDQYADASIGNVTGSNAVNV. The Cytoplasmic portion of the chain corresponds to 843-871; it reads SVPDTFASKVAATQDQYADASIGNVTGSN. The chain crosses the membrane as a helical span at residues 872–892; it reads AVNVFLGIGVAWSIAAIYHAA. The Extracellular segment spans residues 893-903; that stretch reads NGEQFKVSPGT. Residues 904–924 form a helical membrane-spanning segment; that stretch reads LAFSVTLFTIFAFINVGVLLY. Over 925–941 the chain is Cytoplasmic; the sequence is RRRPEIGGELGGPRTAK. Residues 942–962 traverse the membrane as a helical segment; the sequence is LLTSCLFVLLWLLYIFFSSLE. Residues 963–970 lie on the Extracellular side of the membrane; that stretch reads AYCHIKGF.

Belongs to the Ca(2+):cation antiporter (CaCA) (TC 2.A.19) family. SLC8 subfamily.

It localises to the cell membrane. It catalyses the reaction Ca(2+)(in) + 3 Na(+)(out) = Ca(2+)(out) + 3 Na(+)(in). Its activity is regulated as follows. Activated by micromolar levels of Ca(2+). Its function is as follows. Mediates the exchange of one Ca(2+) ion against three to four Na(+) ions across the cell membrane, and thereby contributes to the regulation of cytoplasmic Ca(2+) levels and Ca(2+)-dependent cellular processes. Contributes to Ca(2+) transport during excitation-contraction coupling in muscle. In a first phase, voltage-gated channels mediate the rapid increase of cytoplasmic Ca(2+) levels due to release of Ca(2+) stores from the endoplasmic reticulum. SLC8A1 mediates the export of Ca(2+) from the cell during the next phase, so that cytoplasmic Ca(2+) levels rapidly return to baseline. Required for normal embryonic heart development and the onset of heart contractions. The polypeptide is Sodium/calcium exchanger 1 (SLC8A1) (Bos taurus (Bovine)).